A 292-amino-acid chain; its full sequence is Ribonuclease HIII (292 aa).

The 217-residue stretch at 76–292 (TNLIGTDEVG…TQKAIKIAQL (217 aa)) folds into the RNase H type-2 domain. Positions 82, 83, and 186 each coordinate a divalent metal cation.

The protein belongs to the RNase HII family. RnhC subfamily. It depends on Mn(2+) as a cofactor. Requires Mg(2+) as cofactor.

Its subcellular location is the cytoplasm. It catalyses the reaction Endonucleolytic cleavage to 5'-phosphomonoester.. In terms of biological role, endonuclease that specifically degrades the RNA of RNA-DNA hybrids. In Lactococcus lactis subsp. lactis (strain IL1403) (Streptococcus lactis), this protein is Ribonuclease HIII.